A 406-amino-acid chain; its full sequence is Methylthioribose-1-phosphate isomerase (406 aa).

Catalysis depends on D277, which acts as the Proton donor.

This sequence belongs to the eIF-2B alpha/beta/delta subunits family. MtnA subfamily.

It localises to the cytoplasm. The protein resides in the nucleus. The enzyme catalyses 5-(methylsulfanyl)-alpha-D-ribose 1-phosphate = 5-(methylsulfanyl)-D-ribulose 1-phosphate. Its pathway is amino-acid biosynthesis; L-methionine biosynthesis via salvage pathway; L-methionine from S-methyl-5-thio-alpha-D-ribose 1-phosphate: step 1/6. Catalyzes the interconversion of methylthioribose-1-phosphate (MTR-1-P) into methylthioribulose-1-phosphate (MTRu-1-P). The polypeptide is Methylthioribose-1-phosphate isomerase (Debaryomyces hansenii (strain ATCC 36239 / CBS 767 / BCRC 21394 / JCM 1990 / NBRC 0083 / IGC 2968) (Yeast)).